The chain runs to 450 residues: Glutamate--tRNA ligase 1 (450 aa).

A 'HIGH' region motif is present at residues 7–17 (PSPTGYMHVGN). The short motif at 236–240 (KISKR) is the 'KMSKS' region element. K239 provides a ligand contact to ATP.

This sequence belongs to the class-I aminoacyl-tRNA synthetase family. Glutamate--tRNA ligase type 1 subfamily. As to quaternary structure, monomer.

The protein localises to the cytoplasm. The enzyme catalyses tRNA(Glu) + L-glutamate + ATP = L-glutamyl-tRNA(Glu) + AMP + diphosphate. Its function is as follows. Catalyzes the attachment of glutamate to tRNA(Glu) in a two-step reaction: glutamate is first activated by ATP to form Glu-AMP and then transferred to the acceptor end of tRNA(Glu). This Anaplasma phagocytophilum (strain HZ) protein is Glutamate--tRNA ligase 1.